We begin with the raw amino-acid sequence, 384 residues long: DNA replication and repair protein RecF (384 aa).

G30–S37 contacts ATP.

Belongs to the RecF family.

The protein localises to the cytoplasm. In terms of biological role, the RecF protein is involved in DNA metabolism; it is required for DNA replication and normal SOS inducibility. RecF binds preferentially to single-stranded, linear DNA. It also seems to bind ATP. The chain is DNA replication and repair protein RecF from Gloeothece citriformis (strain PCC 7424) (Cyanothece sp. (strain PCC 7424)).